A 297-amino-acid polypeptide reads, in one-letter code: 3-methyl-2-oxobutanoate hydroxymethyltransferase (297 aa).

Residues 1–12 are compositionally biased toward polar residues; the sequence is MSEQISEQSEQN. The interval 1 to 36 is disordered; the sequence is MSEQISEQSEQNVYGACPPVPAGESSPSAASAPRTK. The segment covering 22-33 has biased composition (low complexity); it reads AGESSPSAASAP. Mg(2+) contacts are provided by aspartate 78 and aspartate 117. Residues 78-79, aspartate 117, and lysine 147 contribute to the 3-methyl-2-oxobutanoate site; that span reads DS. Glutamate 149 contacts Mg(2+). Catalysis depends on glutamate 215, which acts as the Proton acceptor.

This sequence belongs to the PanB family. Homodecamer; pentamer of dimers. Mg(2+) is required as a cofactor.

The protein localises to the cytoplasm. It catalyses the reaction 3-methyl-2-oxobutanoate + (6R)-5,10-methylene-5,6,7,8-tetrahydrofolate + H2O = 2-dehydropantoate + (6S)-5,6,7,8-tetrahydrofolate. The protein operates within cofactor biosynthesis; (R)-pantothenate biosynthesis; (R)-pantoate from 3-methyl-2-oxobutanoate: step 1/2. Its function is as follows. Catalyzes the reversible reaction in which hydroxymethyl group from 5,10-methylenetetrahydrofolate is transferred onto alpha-ketoisovalerate to form ketopantoate. The sequence is that of 3-methyl-2-oxobutanoate hydroxymethyltransferase from Mycobacterium ulcerans (strain Agy99).